A 210-amino-acid chain; its full sequence is Imidazole glycerol phosphate synthase subunit HisH (210 aa).

Residues 1-205 (MIAVINYGAG…VELALSRGSG (205 aa)) enclose the Glutamine amidotransferase type-1 domain. The active-site Nucleophile is Cys-79. Active-site residues include His-180 and Glu-182.

As to quaternary structure, heterodimer of HisH and HisF.

The protein localises to the cytoplasm. The enzyme catalyses 5-[(5-phospho-1-deoxy-D-ribulos-1-ylimino)methylamino]-1-(5-phospho-beta-D-ribosyl)imidazole-4-carboxamide + L-glutamine = D-erythro-1-(imidazol-4-yl)glycerol 3-phosphate + 5-amino-1-(5-phospho-beta-D-ribosyl)imidazole-4-carboxamide + L-glutamate + H(+). It catalyses the reaction L-glutamine + H2O = L-glutamate + NH4(+). The protein operates within amino-acid biosynthesis; L-histidine biosynthesis; L-histidine from 5-phospho-alpha-D-ribose 1-diphosphate: step 5/9. IGPS catalyzes the conversion of PRFAR and glutamine to IGP, AICAR and glutamate. The HisH subunit catalyzes the hydrolysis of glutamine to glutamate and ammonia as part of the synthesis of IGP and AICAR. The resulting ammonia molecule is channeled to the active site of HisF. The chain is Imidazole glycerol phosphate synthase subunit HisH from Herpetosiphon aurantiacus (strain ATCC 23779 / DSM 785 / 114-95).